The following is a 272-amino-acid chain: Eukaryotic translation initiation factor 4E homolog (272 aa).

The interval 249–272 (GKLNSGRKPSNTRGGFSSFGNKRY) is disordered. Polar residues predominate over residues 255–272 (RKPSNTRGGFSSFGNKRY).

The protein belongs to the eukaryotic initiation factor 4E family.

Recognizes and binds the 7-methylguanosine-containing mRNA cap during an early step in the initiation of protein synthesis and facilitates ribosome binding by inducing the unwinding of the mRNAs secondary structures. The sequence is that of Eukaryotic translation initiation factor 4E homolog from Acanthamoeba polyphaga mimivirus (APMV).